Reading from the N-terminus, the 261-residue chain is Leucyl/phenylalanyl-tRNA--protein transferase (261 aa).

It belongs to the L/F-transferase family.

It localises to the cytoplasm. It carries out the reaction N-terminal L-lysyl-[protein] + L-leucyl-tRNA(Leu) = N-terminal L-leucyl-L-lysyl-[protein] + tRNA(Leu) + H(+). The enzyme catalyses N-terminal L-arginyl-[protein] + L-leucyl-tRNA(Leu) = N-terminal L-leucyl-L-arginyl-[protein] + tRNA(Leu) + H(+). The catalysed reaction is L-phenylalanyl-tRNA(Phe) + an N-terminal L-alpha-aminoacyl-[protein] = an N-terminal L-phenylalanyl-L-alpha-aminoacyl-[protein] + tRNA(Phe). Functions in the N-end rule pathway of protein degradation where it conjugates Leu, Phe and, less efficiently, Met from aminoacyl-tRNAs to the N-termini of proteins containing an N-terminal arginine or lysine. The sequence is that of Leucyl/phenylalanyl-tRNA--protein transferase from Yersinia pestis bv. Antiqua (strain Antiqua).